A 252-amino-acid chain; its full sequence is Type III pantothenate kinase (252 aa).

6-13 contacts ATP; that stretch reads DIGNTSTA. 104-107 contributes to the substrate binding site; the sequence is GADR. Catalysis depends on Asp106, which acts as the Proton acceptor. Residue Asp128 participates in K(+) binding. Thr131 is an ATP binding site. Thr183 contributes to the substrate binding site.

This sequence belongs to the type III pantothenate kinase family. As to quaternary structure, homodimer. Requires NH4(+) as cofactor. The cofactor is K(+).

The protein resides in the cytoplasm. The enzyme catalyses (R)-pantothenate + ATP = (R)-4'-phosphopantothenate + ADP + H(+). Its pathway is cofactor biosynthesis; coenzyme A biosynthesis; CoA from (R)-pantothenate: step 1/5. Functionally, catalyzes the phosphorylation of pantothenate (Pan), the first step in CoA biosynthesis. This Thermus thermophilus (strain ATCC BAA-163 / DSM 7039 / HB27) protein is Type III pantothenate kinase.